The chain runs to 47 residues: APTPATLNGLTIFAPNDEAFKATGVPDLSKLSNAPMVSLLQYHAAAR.

The region spanning 1–47 is the FAS1 domain; sequence APTPATLNGLTIFAPNDEAFKATGVPDLSKLSNAPMVSLLQYHAAAR.

It belongs to the fasciclin-like AGP family.

In terms of biological role, may be a cell surface adhesion protein. The chain is Fasciclin-like arabinogalactan protein from Jatropha curcas (Barbados nut).